The sequence spans 369 residues: Anthranilate phosphoribosyltransferase (369 aa).

Residues glycine 111, 114-115 (GD), threonine 119, 121-124 (NIST), 139-147 (KHGNRGVSS), and serine 151 contribute to the 5-phospho-alpha-D-ribose 1-diphosphate site. An anthranilate-binding site is contributed by glycine 111. Serine 123 provides a ligand contact to Mg(2+). Asparagine 142 serves as a coordination point for anthranilate. Arginine 197 is a binding site for anthranilate. Positions 256 and 257 each coordinate Mg(2+).

The protein belongs to the anthranilate phosphoribosyltransferase family. Homodimer. The cofactor is Mg(2+).

It carries out the reaction N-(5-phospho-beta-D-ribosyl)anthranilate + diphosphate = 5-phospho-alpha-D-ribose 1-diphosphate + anthranilate. It participates in amino-acid biosynthesis; L-tryptophan biosynthesis; L-tryptophan from chorismate: step 2/5. Functionally, catalyzes the transfer of the phosphoribosyl group of 5-phosphorylribose-1-pyrophosphate (PRPP) to anthranilate to yield N-(5'-phosphoribosyl)-anthranilate (PRA). This is Anthranilate phosphoribosyltransferase from Cupriavidus pinatubonensis (strain JMP 134 / LMG 1197) (Cupriavidus necator (strain JMP 134)).